Consider the following 778-residue polypeptide: Dapper homolog 1 (778 aa).

Basic and acidic residues-rich tracts occupy residues 1–10 (MKPDAAREPE) and 18–40 (AEAEGRWRERGEADTERQRTRER). The interval 1 to 40 (MKPDAAREPEPLSPGRGAEAEGRWRERGEADTERQRTRER) is disordered. Residues 85–149 (DAAQRSRLEE…SEEHLETDSR (65 aa)) are required for self-association. A coiled-coil region spans residues 85–149 (DAAQRSRLEE…SEEHLETDSR (65 aa)). The short motif at 125–134 (LDKQISDLRL) is the Nuclear export signal element. 6 disordered regions span residues 305–324 (KTHPVRTNKPRTSVNADPTK), 359–386 (GGITSLENGPFSPPKQRSKDSKTDQLES), 397–416 (AGAAMEPQSKHVPKAAKAAS), 428–468 (ESMK…SQKN), 544–616 (EKPR…HKRT), and 694–721 (NCFGDSESSVSEGDFVGESTTTSDSEES). Over residues 375–386 (RSKDSKTDQLES) the composition is skewed to basic and acidic residues. A compositionally biased stretch (polar residues) spans 432 to 443 (ESNQASAVSPKT). A Bipartite nuclear localization signal motif is present at residues 551 to 564 (KKCRFPDDSDTNKK). The span at 554 to 563 (RFPDDSDTNK) shows a compositional bias: basic and acidic residues. The span at 564-574 (KFRKTSAKGRR) shows a compositional bias: basic residues. The span at 694-704 (NCFGDSESSVS) shows a compositional bias: polar residues. The PDZ-binding motif lies at 768–778 (RSGSLKLMTTV). Ser769 is modified (phosphoserine; by PKA).

The protein belongs to the dapper family. Can form homodimers and heterodimers with DACT2 or DACT3. Interacts with CSNK1D, PKA catalytic subunit, PKC-type kinase, CSNK2A1, CSNK2B, DVL1, DLV2, DVAL3, VANGL1, VANGL2, CTNND1 and HDAC1. Interacts with GSK3B; the interaction is indicative for an association of DACT1 with the beta-catenin destruction complex. Interacts with GSK3A. Interacts with YWHAB; the interaction is enhanced by PKA phosphorylating DACT1 at Ser-769. Interacts with CTNNB1. In terms of tissue distribution, expressed in multiple tissues including brain, heart, kidney, liver and testis.

The protein resides in the cytoplasm. It is found in the nucleus. It localises to the synapse. Involved in regulation of intracellular signaling pathways during development. Specifically thought to play a role in canonical and/or non-canonical Wnt signaling pathways through interaction with DSH (Dishevelled) family proteins. The activation/inhibition of Wnt signaling may depend on the phosphorylation status. Proposed to regulate the degradation of CTNNB1/beta-catenin, thereby modulating the transcriptional activation of target genes of the Wnt signaling pathway. Its function in stabilizing CTNNB1 may involve inhibition of GSK3B activity. Promotes the membrane localization of CTNNB1. The cytoplasmic form can induce DVL2 degradation via a lysosome-dependent mechanism; the function is inhibited by PKA-induced binding to 14-3-3 proteins, such as YWHAB. Seems to be involved in morphogenesis at the primitive streak by regulating VANGL2 and DVL2; the function seems to be independent of canonical Wnt signaling and rather involves the non-canonical Wnt/planar cell polarity (PCP) pathway. The nuclear form may prevent the formation of LEF1:CTNNB1 complex and recruit HDAC1 to LEF1 at target gene promoters to repress transcription thus antagonizing Wnt signaling. May be involved in positive regulation of fat cell differentiation. During neuronal differentiation may be involved in excitatory synapse organization, and dendrite formation and establishment of spines. This is Dapper homolog 1 (Dact1) from Mus musculus (Mouse).